Reading from the N-terminus, the 390-residue chain is Oxysterol-binding protein 10 (390 aa).

It belongs to the OSBP family.

The chain is Oxysterol-binding protein 10 (osbJ) from Dictyostelium discoideum (Social amoeba).